Reading from the N-terminus, the 464-residue chain is MAVYNYDVVVLGSGPAGEGAAMNAAKAGRKVAMVDDRRQVGGNCTHLGTIPSKALRHSVRQIMQFNTNPMFRAIGEPRWFSFPDVLKSAEKVIAKQVASRTGYYARNRVDVFVGTGSFADEQTVEVVCPNGVVEKLNAKHIIIATGSRPYRPADIDFHHPRVYDSDTILSLSHTPRKLIVYGAGVIGCEYASIFSGLGVLVELVDNRGQLLSFLDSEISQALSYHFSNNNITVRHNEEYERVEGLDNGVILHLKSGKKIKADALLWCNGRTGNTDKLGLENIGIKVNSRGQIEVDEAYRTTVPNIYGAGDVIGWPSLASAAHDQGRSAAGSIVDNGSWRFVNDVPTGIYTIPEISSIGKNEQELTQAKVPYEVGKAFFKSMARAQIAGEPQGMLKILFHRETLEILGVHCFGYQASEIVHIGQAIMNQPGEQNNLKYFVNTTFNYPTMAEAYRVAAYDGLNRLF.

Position 35-44 (35-44 (DDRRQVGGNC)) interacts with FAD.

The protein belongs to the class-I pyridine nucleotide-disulfide oxidoreductase family. It depends on FAD as a cofactor.

It localises to the cytoplasm. It carries out the reaction NAD(+) + NADPH = NADH + NADP(+). Functionally, conversion of NADPH, generated by peripheral catabolic pathways, to NADH, which can enter the respiratory chain for energy generation. This Pseudomonas putida (strain ATCC 47054 / DSM 6125 / CFBP 8728 / NCIMB 11950 / KT2440) protein is Soluble pyridine nucleotide transhydrogenase.